Reading from the N-terminus, the 434-residue chain is Cysteine proteinase 6 (434 aa).

The N-terminal stretch at 1–19 is a signal peptide; the sequence is MKVLSALCVLLVSVATAKQ. Residues 20–113 constitute a propeptide, activation peptide; it reads QLSELQYRNA…SEKVFGGVQA (94 aa). Disulfide bonds link Cys133/Cys178 and Cys169/Cys211. Cys136 is an active-site residue. Asn227 is a glycosylation site (N-linked (GlcNAc...) asparagine). Cys269 and Cys416 are joined by a disulfide. Residue His276 is part of the active site. The segment at 285-384 is disordered; the sequence is SGSSGSQSQS…GGNSNSGDYP (100 aa). Over residues 288–347 the composition is skewed to low complexity; that stretch reads SGSQSQSAGSQSQSSNNNWSESSQSQDSNSWSQSSQSQSSQDSNSWSQSSQSQGSNSFTG. N-linked (GlcNAc...) asparagine glycosylation is present at Asn305. Gly residues predominate over residues 348–358; sequence AGTGSGSGSVS. The segment covering 359-381 has biased composition (low complexity); sequence GSGSASGSSSFSGSSNGGNSNSG. The active site involves Asn394.

The protein belongs to the peptidase C1 family.

The protein localises to the lysosome. This Dictyostelium discoideum (Social amoeba) protein is Cysteine proteinase 6 (cprF).